We begin with the raw amino-acid sequence, 425 residues long: MAIGVGGCCAVLLAAALLFSSPATTYAYDSLDPNGNITIKWDVMQWTPDGYAAVVTLSNYQQFRHIQPPGWQLGWTWQQKEVIWSMYGAQAIEQGDCSMSKEGSNVPHSCKKHPTVVDLLPGAPIDLQIANCCKAGSLSAFSQDPANSAASFQIIVGHSGNSNETVRVPKNFSLMAPGPGYTCSRAMIVKPSRFLSPDGRRATQVLMTWNVICTYSQFLAQKVPSCCVSLSSFDNDKTVDCPTCSCGCRNEKSTTGKCVKKNAPDLQSIIHGPGRWTWQPLLQCTSHMCPVKINWHLMLKDKEHYRVKITVTNLNYRMNFTEWNLVVQYHPILDITQISGFNYKSIQVGKINDTTMLWGVKPYYDLLMQAGPLGNVQGELIVRKDFRASSTTNNNKGRAFPVRVYFNGDNCVMPPPDAYPVSITA.

Residues 1–27 form the signal peptide; that stretch reads MAIGVGGCCAVLLAAALLFSSPATTYA. N-linked (GlcNAc...) asparagine glycosylation is found at asparagine 36, asparagine 163, asparagine 171, asparagine 319, and asparagine 352.

It belongs to the COBRA family.

The sequence is that of COBRA-like protein 4 (BC1L9) from Oryza sativa subsp. japonica (Rice).